Reading from the N-terminus, the 358-residue chain is Putative myc-like protein MYCLP1 (358 aa).

Disordered stretches follow at residues 150-171 (ACSR…TVKK) and 219-245 (QEGA…DKED). A compositionally biased stretch (basic and acidic residues) spans 227 to 242 (PPKEALEREAPGGKDD). The 53-residue stretch at 274 to 326 (WTKKKYHSYLERKRRNDQRSRFLALRDEVPALASCSRVSKVMILVKATEYLHE) folds into the bHLH domain.

As to quaternary structure, efficient DNA binding requires dimerization with another bHLH protein. Binds DNA as a heterodimer with MAX. Detected in adult testis.

The protein localises to the nucleus. The chain is Putative myc-like protein MYCLP1 (MYCLP1) from Homo sapiens (Human).